Here is a 454-residue protein sequence, read N- to C-terminus: Chromosomal replication initiator protein DnaA (454 aa).

Residues 1 to 81 form a domain I, interacts with DnaA modulators region; the sequence is MNNSLWQQCA…PNVVLKVGEA (81 aa). The segment at 79–110 is disordered; sequence GEASPTQRDSGSPQRAAATRRKTPNFSSGNTD. The interval 81-117 is domain II; the sequence is ASPTQRDSGSPQRAAATRRKTPNFSSGNTDVEVPFES. A compositionally biased stretch (polar residues) spans 82–91; sequence SPTQRDSGSP. Positions 118–334 are domain III, AAA+ region; sequence NIHPEYTFDN…GALNRVVANV (217 aa). Residues Gly-162, Gly-164, Lys-165, and Thr-166 each coordinate ATP. The tract at residues 335–454 is domain IV, binds dsDNA; it reads QLTGRPITID…YRNLIRTLSS (120 aa).

The protein belongs to the DnaA family. In terms of assembly, oligomerizes as a right-handed, spiral filament on DNA at oriC.

The protein resides in the cytoplasm. Its function is as follows. Plays an essential role in the initiation and regulation of chromosomal replication. ATP-DnaA binds to the origin of replication (oriC) to initiate formation of the DNA replication initiation complex once per cell cycle. Binds the DnaA box (a 9 base pair repeat at the origin) and separates the double-stranded (ds)DNA. Forms a right-handed helical filament on oriC DNA; dsDNA binds to the exterior of the filament while single-stranded (ss)DNA is stabiized in the filament's interior. The ATP-DnaA-oriC complex binds and stabilizes one strand of the AT-rich DNA unwinding element (DUE), permitting loading of DNA polymerase. After initiation quickly degrades to an ADP-DnaA complex that is not apt for DNA replication. Binds acidic phospholipids. The chain is Chromosomal replication initiator protein DnaA from Idiomarina loihiensis (strain ATCC BAA-735 / DSM 15497 / L2-TR).